Reading from the N-terminus, the 520-residue chain is Nonsense-mediated mRNA decay factor SMG9 (520 aa).

The tract at residues 1–143 (MSESGHSQPG…KGEKEGQRPT (143 aa)) is disordered. Position 2 is an N-acetylserine (serine 2). Phosphoserine is present on residues serine 2, serine 4, serine 7, serine 32, and serine 53. Over residues 36-53 (GRERDYIAPWERERRDGS) the composition is skewed to basic and acidic residues. A compositionally biased stretch (pro residues) spans 78–94 (QPPPPAAPAAPPAPAPL). Residues 109-121 (GPAATTSTSTPEG) show a composition bias toward low complexity. Residues 122–133 (TAPPPPAAPVPP) show a composition bias toward pro residues. Serine 451 bears the Phosphoserine mark.

This sequence belongs to the SMG9 family. Self-associates to form homodimers and forms heterodimers with SMG8; these assembly forms may represent SMG1C intermediate forms. Component of the SMG1C complex composed of SMG1, SMG8 and SMG9. Self-associates to form homodimers and forms heterodimers with SMG8; these assembly forms may represent SMG1C intermediate forms. Interacts with DHX34; the interaction is RNA-independent. Post-translationally, phosphorylated by SMG1.

Its function is as follows. Involved in nonsense-mediated decay (NMD) of mRNAs containing premature stop codons. Is recruited by release factors to stalled ribosomes together with SMG1 and SMG8 (forming the SMG1C protein kinase complex) and, in the SMG1C complex, is required for the efficient association between SMG1 and SMG8. Plays a role in brain, heart, and eye development. The chain is Nonsense-mediated mRNA decay factor SMG9 from Bos taurus (Bovine).